Here is a 197-residue protein sequence, read N- to C-terminus: CASP-like protein 1B1 (197 aa).

Alanine 2 carries the N-acetylalanine modification. Over alanine 2–lysine 17 the chain is Cytoplasmic. The helical transmembrane segment at isoleucine 18–glycine 38 threads the bilayer. Over leucine 39 to alanine 69 the chain is Extracellular. The helical transmembrane segment at phenylalanine 70–leucine 90 threads the bilayer. Residues glutamine 91–serine 106 lie on the Cytoplasmic side of the membrane. The helical transmembrane segment at valine 107–phenylalanine 127 threads the bilayer. The Extracellular portion of the chain corresponds to methionine 128–alanine 156. Residues glycine 157–isoleucine 177 traverse the membrane as a helical segment. Residues serine 178–proline 197 lie on the Cytoplasmic side of the membrane.

The protein belongs to the Casparian strip membrane proteins (CASP) family. Homodimer and heterodimers.

The protein localises to the cell membrane. This chain is CASP-like protein 1B1, found in Arabidopsis thaliana (Mouse-ear cress).